The chain runs to 489 residues: ATP synthase subunit beta, chloroplastic (489 aa).

170–177 provides a ligand contact to ATP; sequence GGAGVGKT.

Belongs to the ATPase alpha/beta chains family. As to quaternary structure, F-type ATPases have 2 components, CF(1) - the catalytic core - and CF(0) - the membrane proton channel. CF(1) has five subunits: alpha(3), beta(3), gamma(1), delta(1), epsilon(1). CF(0) has four main subunits: a(1), b(1), b'(1) and c(9-12).

It localises to the plastid. Its subcellular location is the chloroplast thylakoid membrane. It carries out the reaction ATP + H2O + 4 H(+)(in) = ADP + phosphate + 5 H(+)(out). In terms of biological role, produces ATP from ADP in the presence of a proton gradient across the membrane. The catalytic sites are hosted primarily by the beta subunits. The protein is ATP synthase subunit beta, chloroplastic of Zygnema circumcarinatum (Green alga).